Consider the following 334-residue polypeptide: Glycerol-3-phosphate dehydrogenase [NAD(P)+] (334 aa).

NADPH is bound by residues Ser-13, Phe-14, and Lys-108. Residues Lys-108, Gly-137, and Thr-139 each coordinate sn-glycerol 3-phosphate. Residue Ala-141 coordinates NADPH. Lys-193, Asp-246, Ser-256, Arg-257, and Asn-258 together coordinate sn-glycerol 3-phosphate. Lys-193 functions as the Proton acceptor in the catalytic mechanism. Arg-257 is a binding site for NADPH. NADPH is bound by residues Val-281 and Glu-283.

The protein belongs to the NAD-dependent glycerol-3-phosphate dehydrogenase family.

It localises to the cytoplasm. The catalysed reaction is sn-glycerol 3-phosphate + NAD(+) = dihydroxyacetone phosphate + NADH + H(+). The enzyme catalyses sn-glycerol 3-phosphate + NADP(+) = dihydroxyacetone phosphate + NADPH + H(+). Its pathway is membrane lipid metabolism; glycerophospholipid metabolism. Its function is as follows. Catalyzes the reduction of the glycolytic intermediate dihydroxyacetone phosphate (DHAP) to sn-glycerol 3-phosphate (G3P), the key precursor for phospholipid synthesis. This is Glycerol-3-phosphate dehydrogenase [NAD(P)+] from Bartonella tribocorum (strain CIP 105476 / IBS 506).